We begin with the raw amino-acid sequence, 91 residues long: Large ribosomal subunit protein uL23 (91 aa).

The protein belongs to the universal ribosomal protein uL23 family. Part of the 50S ribosomal subunit. Contacts protein L29, and trigger factor when it is bound to the ribosome.

Functionally, one of the early assembly proteins it binds 23S rRNA. One of the proteins that surrounds the polypeptide exit tunnel on the outside of the ribosome. Forms the main docking site for trigger factor binding to the ribosome. The chain is Large ribosomal subunit protein uL23 from Staphylococcus haemolyticus (strain JCSC1435).